The primary structure comprises 238 residues: Putative tyrosine-protein phosphatase OCA1 (238 aa).

The disordered stretch occupies residues 1–43 (MTSKVGEYEDVPEDESRLTEENVSVPEEEVEDEDEEEDDDDDH). At Thr-2 the chain carries N-acetylthreonine. Ser-24 carries the phosphoserine modification. Positions 26 to 42 (PEEEVEDEDEEEDDDDD) are enriched in acidic residues. Positions 72–230 (NFCPVERYLY…LVKIDKNKAP (159 aa)) constitute a Tyrosine-protein phosphatase domain. Cys-168 (phosphocysteine intermediate) is an active-site residue.

The protein belongs to the protein-tyrosine phosphatase family.

It localises to the cytoplasm. It carries out the reaction O-phospho-L-tyrosyl-[protein] + H2O = L-tyrosyl-[protein] + phosphate. In terms of biological role, putative tyrosine-protein phosphatase required for protection against superoxide stress. Involved in cell-cycle delay in response to linoleic acid hydroperoxide (LoaOOH). The chain is Putative tyrosine-protein phosphatase OCA1 (OCA1) from Saccharomyces cerevisiae (strain YJM789) (Baker's yeast).